We begin with the raw amino-acid sequence, 355 residues long: Sorbitol dehydrogenase (355 aa).

Ala2 is modified (N-acetylalanine). Cys43 is a binding site for Zn(2+). Tyr49 provides a ligand contact to substrate. Positions 68 and 69 each coordinate Zn(2+). Glu154 provides a ligand contact to substrate. Residues Ile182, Asp202, Arg207, 271-273, and 295-297 contribute to the NAD(+) site; these read VGL and IFR. Substrate contacts are provided by Arg297 and Tyr298.

Belongs to the zinc-containing alcohol dehydrogenase family. Homotetramer. It depends on Zn(2+) as a cofactor. In terms of tissue distribution, expressed in liver.

The protein localises to the mitochondrion membrane. Its subcellular location is the cell projection. The protein resides in the cilium. It localises to the flagellum. The catalysed reaction is keto-D-fructose + NADH + H(+) = D-sorbitol + NAD(+). In terms of biological role, polyol dehydrogenase that catalyzes the reversible NAD(+)-dependent oxidation of various sugar alcohols. Is active with D-sorbitol (D-glucitol) as substrate, leading to the C2-oxidized product D-fructose. Is a key enzyme in the polyol pathway that interconverts glucose and fructose via sorbitol, which constitutes an important alternate route for glucose metabolism. The sequence is that of Sorbitol dehydrogenase (SORD) from Gallus gallus (Chicken).